The following is a 97-amino-acid chain: Apolipoprotein C-II (97 aa).

The signal sequence occupies residues 1–22 (MGSRFFLALFLVILMLGNEVQG). Residues 63–71 (SMDEKLRDM) form a lipid binding region. The tract at residues 75-97 (SSAAMSTYAGIFTDQLLTLLRGE) is lipoprotein lipase cofactor.

This sequence belongs to the apolipoprotein C2 family. As to expression, adult and fetal liver, intestine and peritoneal macrophages.

It localises to the secreted. Its function is as follows. Component of chylomicrons, very low-density lipoproteins (VLDL), low-density lipoproteins (LDL), and high-density lipoproteins (HDL) in plasma. Plays an important role in lipoprotein metabolism as an activator of lipoprotein lipase. This chain is Apolipoprotein C-II (Apoc2), found in Mus musculus (Mouse).